The following is a 25-amino-acid chain: Dermaseptin-5.1TR (25 aa).

V25 is subject to Valine amide.

In terms of tissue distribution, expressed by the skin glands.

The protein localises to the secreted. Functionally, has antimicrobial activity. This chain is Dermaseptin-5.1TR, found in Phyllomedusa trinitatis (Trinidad leaf frog).